The sequence spans 241 residues: Small ribosomal subunit protein uS5 (241 aa).

The segment at 1–53 (MSDNEKETQVAEETQNTQAAAESNNEDRKSRRGQRGEGRRGERRNRREESHEN) is disordered. Over residues 11-22 (AEETQNTQAAAE) the composition is skewed to low complexity. Residues 25-53 (NEDRKSRRGQRGEGRRGERRNRREESHEN) show a composition bias toward basic and acidic residues. In terms of domain architecture, S5 DRBM spans 55 to 118 (MLDRVVTINR…LDAKKHMFTV (64 aa)).

This sequence belongs to the universal ribosomal protein uS5 family. In terms of assembly, part of the 30S ribosomal subunit. Contacts proteins S4 and S8.

Functionally, with S4 and S12 plays an important role in translational accuracy. Its function is as follows. Located at the back of the 30S subunit body where it stabilizes the conformation of the head with respect to the body. The sequence is that of Small ribosomal subunit protein uS5 from Bifidobacterium adolescentis (strain ATCC 15703 / DSM 20083 / NCTC 11814 / E194a).